A 608-amino-acid polypeptide reads, in one-letter code: 1-deoxy-D-xylulose-5-phosphate synthase (608 aa).

Residues His66 and 107–109 each bind thiamine diphosphate; that span reads GHA. Asp138 is a Mg(2+) binding site. Thiamine diphosphate-binding positions include 139–140, Asn167, Phe277, and Glu350; that span reads GA. Asn167 contacts Mg(2+).

The protein belongs to the transketolase family. DXPS subfamily. Homodimer. It depends on Mg(2+) as a cofactor. The cofactor is thiamine diphosphate.

It carries out the reaction D-glyceraldehyde 3-phosphate + pyruvate + H(+) = 1-deoxy-D-xylulose 5-phosphate + CO2. Its pathway is metabolic intermediate biosynthesis; 1-deoxy-D-xylulose 5-phosphate biosynthesis; 1-deoxy-D-xylulose 5-phosphate from D-glyceraldehyde 3-phosphate and pyruvate: step 1/1. In terms of biological role, catalyzes the acyloin condensation reaction between C atoms 2 and 3 of pyruvate and glyceraldehyde 3-phosphate to yield 1-deoxy-D-xylulose-5-phosphate (DXP). This chain is 1-deoxy-D-xylulose-5-phosphate synthase, found in Thermotoga petrophila (strain ATCC BAA-488 / DSM 13995 / JCM 10881 / RKU-1).